A 217-amino-acid polypeptide reads, in one-letter code: MGQKVHPIGMRVGIIRDWDAKWYAEKEYADYLHEDLAIRKFVQKELADAAVSTIEIERAVNKVNVSLHTAKPGMVIGKGGANVDALRAKLNKLTGKQVHINIIEIKQPDLDAHLVGEGIARQLEQRVAFRRAQKQAIQRAMRAGAKGIKTQVSGRLNGADIARAEGYSEGTVPLHTLRADIDYAWEEADTTYGKLGVKVWIYRGEVLPARKNTKGGK.

A KH type-2 domain is found at 38–106 (IRKFVQKELA…QVHINIIEIK (69 aa)).

It belongs to the universal ribosomal protein uS3 family. In terms of assembly, part of the 30S ribosomal subunit. Forms a tight complex with proteins S10 and S14.

Functionally, binds the lower part of the 30S subunit head. Binds mRNA in the 70S ribosome, positioning it for translation. The polypeptide is Small ribosomal subunit protein uS3 (Streptococcus pneumoniae serotype 19F (strain G54)).